The sequence spans 142 residues: Large ribosomal subunit protein mL42 (142 aa).

The N-terminal 32 residues, 1 to 32 (MAVAAVKWVMSKRTILKHLFPVQNGALYCVCH), are a transit peptide targeting the mitochondrion.

Belongs to the mitochondrion-specific ribosomal protein mL42 family. In terms of assembly, component of the mitochondrial large ribosomal subunit (mt-LSU). Mature mammalian 55S mitochondrial ribosomes consist of a small (28S) and a large (39S) subunit. The 28S small subunit contains a 12S ribosomal RNA (12S mt-rRNA) and 30 different proteins. The 39S large subunit contains a 16S rRNA (16S mt-rRNA), a copy of mitochondrial valine transfer RNA (mt-tRNA(Val)), which plays an integral structural role, and 52 different proteins.

The protein resides in the mitochondrion. This chain is Large ribosomal subunit protein mL42 (MRPL42), found in Homo sapiens (Human).